Here is a 59-residue protein sequence, read N- to C-terminus: uncharacterized protein (59 aa).

Residues 7-27 form a helical membrane-spanning segment; it reads LLLLVAIALISAFALTVTGVV.

The protein resides in the membrane. This is an uncharacterized protein from Pyrobaculum aerophilum (strain ATCC 51768 / DSM 7523 / JCM 9630 / CIP 104966 / NBRC 100827 / IM2).